A 57-amino-acid chain; its full sequence is Large ribosomal subunit protein bL32 (57 aa).

The segment at 1-25 (MATPSNKNSKSHKRNRRGHIGLNVP) is disordered. The segment covering 9 to 19 (SKSHKRNRRGH) has biased composition (basic residues).

Belongs to the bacterial ribosomal protein bL32 family.

The sequence is that of Large ribosomal subunit protein bL32 from Leuconostoc mesenteroides subsp. mesenteroides (strain ATCC 8293 / DSM 20343 / BCRC 11652 / CCM 1803 / JCM 6124 / NCDO 523 / NBRC 100496 / NCIMB 8023 / NCTC 12954 / NRRL B-1118 / 37Y).